Reading from the N-terminus, the 1823-residue chain is MTYNNNNNYLAPPLMTSTSTSTSTSTPTSTKTSPLNTSSSSNILKSNSRNPSPNNPTNIGNSSGGGGVSSNNSNNIVYSNSNNINTSTFHYNFNVKFNEIVNSIAVNRAGTLVCLGGKKSLQVVDLELLKSVRNIPQQSKWEVGVVDWNSQSPNLVASSSNQDTFIWDIENPKYPLLGQFSSHQRAISDLSWSLFDNNILATTSADSFVNIWDLRTPKKAVKFKSLKSHILGAIQVKWNRFNSNVLASAHESYLMIWDIRKDSQELNTAVHSAKVYGIDWSHRDEKEILTCSQDKTVKIWNYPSPKPKSTIITSNPILRAKYLPLGSGGIVTISDRGENHIRLWDSATSDYSTPVETFIGHTDNVRSFDFRVRSSQNDNDIQIVSWSKDQYLRLWKLDDHLKDLFNIEYIPFTPLNLPTTTTTTTTATTTTTNNSTSEMLNESTDNNNNTNSLNSSTLLSTPNLESSINSLNMELTIEQQQLDDSNTPKDLEYELKIIQSKVIDKYLKIEQVNLFKRTCVVICTIPNNYQPDDDNNNNNLNNLNNNNNTQDNIDNNDDNNNNELIDSTTVQIRFSFPSLYPSTYPNLEFIPHACTTPLKTNLLIKSTLNELCAFKSSQSKNCFEQCLIELVKLVKQYILDEKPKNTSINITETNNNNNNHNNSVQNNNNNNNNNNNNNNNSGGGFLKNVFSKSSKAVEVVKQPFINLRNSSGRIDISQQQQQQQQQQAATTSTSSSSSSSSNTQQQQQFLTATVSNKGGTVLSKSPTSPRMFEQYRPGKTNKTNEIIFLNNYKDSNEEQLPLSPILTNLNNNSNNNSGSGGGGSSNMNASITTSTTTNDQVSLSVHRNSYRIQENYPCPRLCGAVFGGCGKLIVFRNTIITNIPNNNKNSDNSNNNNSSSSNKNSDNSNNSNNNSNNTNSSSSSNNGGIANVGGGSSSTSSLIHHHLQHLHLNQPQLNLLSLSLSSSSSSISDTTNNTSNTTQNIQNTTKNINPPRTYKELLNILSTTNNTIKNNITGNNNINSNSNTTNNLTSPNPNRLNRLNEKQPYSSSPFNDNPLINDYKNNIFGTPSTSHSFLASPQPSSPISFMNHIDTLLDDSENNLMTMDNNNNNNIVNDEETQQLVTSSSPTFSKSSLNNINNTTNNSNNNSSNSNNNSNSNNNNNNNNNNNNVNNNNDNNNGNGKSLQKTMKIIDISTLSLLNVNLANSYILSGKPVEEICKYNSELAEKENRKDLVKLWNTLGMITDSKLYLKQLINQQQQQSHFGFSGSSGSTGMGGSSSTGIASSTGSNSIRRPTKLESSLHQSISMSNLGQIPSSASSSYSQTSPSLPYNQLYHQTTLQTPSSPSSQQQQIQFYQQQALQLQQQQQQQQQQQREIQFKQTQLIQQAQIEDNGWPNHALGRKLVKSLIDYYKKLEDVQTLATISCILILAANQLQKLKNGESITSIGSSSSSSSSSLASSPLTFSAGGGGGGSYSPMFNFSAISISAPMGIDDMVSKQKGHLYNYYGQQQHSHYHHGYQHHNIHQTYGSHPNDVITYDPNLCLLDPNNSKIYDYYRQQYSDLLYRWGLLEKRAEVLKYIQHKEVDKGINFSIECIKCNRKLNNFYCNNCKIYAVKCSICNISVRGLSSFCLYCGHGGHTNHIKGWFEKQTKCPTGCGCTCSFNLPFIQQQQYQQQLQQQQQQLQQQLQLQQTQQQQPQHYQQHRHSMSGTSHYHQQQPHTHNYQQHISSYAHTTYQPHTPRNNGQPVLPQQRRYSISTFDPQQEQDHEKFNHGGGSGGGDAIFHDILFSPNSSSSSSSYQQQTKNSHQYHHPSNPYMFSN.

Residues 1–68 (MTYNNNNNYL…IGNSSGGGGV (68 aa)) form a disordered region. Low complexity predominate over residues 16-61 (TSTSTSTSTSTPTSTKTSPLNTSSSSNILKSNSRNPSPNNPTNIGN). WD repeat units lie at residues 138-177 (QSKW…YPLL), 182-222 (SHQR…KAVK), 228-267 (SHIL…QELN), 270-310 (VHSA…PKST), 312-354 (ITSN…YSTP), and 360-405 (GHTD…KDLF). 9 disordered regions span residues 418–461 (PTTT…LLST), 530–562 (QPDD…NNNN), 649–687 (NITE…GFLK), 714–778 (IDIS…YRPG), 805–840 (ILTN…TNDQ), 883–940 (IPNN…SSTS), 966–996 (SSSS…NPPR), 1014–1058 (NNIT…NDNP), and 1122–1186 (QQLV…NGKS). Composition is skewed to low complexity over residues 419–432 (TTTT…TTTT) and 440–461 (LNES…LLST). 2 stretches are compositionally biased toward low complexity: residues 654-680 (NNNN…NNNN) and 717-748 (SQQQ…QQQQ). Composition is skewed to polar residues over residues 749-768 (FLTA…SPTS) and 827-840 (MNAS…TNDQ). Composition is skewed to low complexity over residues 885-926 (NNNK…SSNN), 966-993 (SSSS…KNIN), 1014-1041 (NNIT…NRLN), and 1127-1183 (SSSP…NNGN). The WD 7 repeat unit spans residues 1207-1250 (ANSYILSGKPVEEICKYNSELAEKENRKDLVKLWNTLGMITDSK). 3 disordered regions span residues 1264 to 1307 (SHFG…LHQS), 1697 to 1725 (QQQP…HTHN), and 1764 to 1823 (PQQE…MFSN). The segment covering 1282-1293 (STGIASSTGSNS) has biased composition (low complexity). Polar residues predominate over residues 1710-1725 (MSGTSHYHQQQPHTHN).

The sequence is that of WD repeat-containing protein DDB_G0292056 from Dictyostelium discoideum (Social amoeba).